We begin with the raw amino-acid sequence, 101 residues long: Interleukin-8 (101 aa).

The first 22 residues, 1 to 22 (MTSKLAVALLAAFLLSAALCEG), serve as a signal peptide directing secretion. Citrulline is present on Arg-27. Intrachain disulfides connect Cys-34–Cys-61 and Cys-36–Cys-77.

Belongs to the intercrine alpha (chemokine CxC) family. In terms of assembly, homodimer. Interacts with TNFAIP6 (via Link domain); this interaction interferes with chemokine binding to glycosaminoglycans. Citrullination at Arg-27 prevents proteolysis, and dampens tissue inflammation, it also enhances leukocytosis, possibly through impaired chemokine clearance from the blood circulation.

It is found in the secreted. Chemotactic factor that mediates inflammatory response by attracting neutrophils, basophils, and T-cells to clear pathogens and protect the host from infection. Also plays an important role in neutrophil activation. Released in response to an inflammatory stimulus, exerts its effect by binding to the G-protein-coupled receptors CXCR1 and CXCR2, primarily found in neutrophils, monocytes and endothelial cells. G-protein heterotrimer (alpha, beta, gamma subunits) constitutively binds to CXCR1/CXCR2 receptor and activation by IL8 leads to beta and gamma subunits release from Galpha (GNAI2 in neutrophils) and activation of several downstream signaling pathways including PI3K and MAPK pathways. The polypeptide is Interleukin-8 (CXCL8) (Macaca mulatta (Rhesus macaque)).